The primary structure comprises 205 residues: Isochorismatase domain-containing protein 2 (205 aa).

2 positions are modified to phosphoserine: Ser-7 and Ser-202.

Belongs to the isochorismatase family. Interacts with CDKN2A.

It is found in the cytoplasm. The protein resides in the nucleus. In Homo sapiens (Human), this protein is Isochorismatase domain-containing protein 2 (ISOC2).